A 446-amino-acid polypeptide reads, in one-letter code: UDP-N-acetylmuramoylalanine--D-glutamate ligase (446 aa).

112–118 (GTNGKST) is an ATP binding site.

This sequence belongs to the MurCDEF family.

The protein resides in the cytoplasm. The enzyme catalyses UDP-N-acetyl-alpha-D-muramoyl-L-alanine + D-glutamate + ATP = UDP-N-acetyl-alpha-D-muramoyl-L-alanyl-D-glutamate + ADP + phosphate + H(+). Its pathway is cell wall biogenesis; peptidoglycan biosynthesis. Its function is as follows. Cell wall formation. Catalyzes the addition of glutamate to the nucleotide precursor UDP-N-acetylmuramoyl-L-alanine (UMA). The protein is UDP-N-acetylmuramoylalanine--D-glutamate ligase of Baumannia cicadellinicola subsp. Homalodisca coagulata.